Consider the following 546-residue polypeptide: Amidase FG08078 (546 aa).

Active-site charge relay system residues include K129 and S204. Residue S228 is the Acyl-ester intermediate of the active site.

The protein belongs to the amidase family.

The protein operates within mycotoxin biosynthesis. Amidase; part of the gene cluster that mediates the biosynthesis of butenolide, a mycotoxin that shows antibiotic activity but does not seem to play a major role in the spread of head blight in wheat. Butenolide is derived from glutamic acid via a 4-acetamido-2-butenoic acid intermediate. The predicted function of the NADH:flavin oxidoreductase FG08077, the cytochrome P450 monooxygenase FG08079, the decarboxylase FG08083, and the putative acetyltransferase FG08082 are consistent with this pathway, however, the respective activities of the butelonide biosynthesis cluster enzymes have still to be experimentally determined. In Gibberella zeae (strain ATCC MYA-4620 / CBS 123657 / FGSC 9075 / NRRL 31084 / PH-1) (Wheat head blight fungus), this protein is Amidase FG08078.